Consider the following 362-residue polypeptide: Ribosomal RNA large subunit methyltransferase M (362 aa).

S-adenosyl-L-methionine is bound by residues Ser-187, 220–223 (CPGG), Asp-239, Asp-259, and Asp-276. The active-site Proton acceptor is Lys-305.

It belongs to the class I-like SAM-binding methyltransferase superfamily. RNA methyltransferase RlmE family. RlmM subfamily. As to quaternary structure, monomer.

The protein localises to the cytoplasm. The enzyme catalyses cytidine(2498) in 23S rRNA + S-adenosyl-L-methionine = 2'-O-methylcytidine(2498) in 23S rRNA + S-adenosyl-L-homocysteine + H(+). In terms of biological role, catalyzes the 2'-O-methylation at nucleotide C2498 in 23S rRNA. This is Ribosomal RNA large subunit methyltransferase M from Shewanella frigidimarina (strain NCIMB 400).